The chain runs to 96 residues: MHVTLVEINVKEDKVEQFVEVFRANHQGSLLEPGNLRFDVLQDESIPTRFYIYEAYVDEAAVAAHKKTPHYLRCVEELEGLMTGPRKKTTFIGLMP.

The 90-residue stretch at 2 to 91 (HVTLVEINVK…MTGPRKKTTF (90 aa)) folds into the ABM domain.

The protein belongs to the LsrG family. In terms of assembly, homodimer.

Its subcellular location is the cytoplasm. The enzyme catalyses (2S)-2-hydroxy-3,4-dioxopentyl phosphate = 3-hydroxy-2,4-dioxopentyl phosphate. Involved in the degradation of phospho-AI-2, thereby terminating induction of the lsr operon and closing the AI-2 signaling cycle. Catalyzes the conversion of (4S)-4-hydroxy-5-phosphonooxypentane-2,3-dione (P-DPD) to 3-hydroxy-5-phosphonooxypentane-2,4-dione (P-HPD). This chain is (4S)-4-hydroxy-5-phosphonooxypentane-2,3-dione isomerase, found in Yersinia enterocolitica serotype O:8 / biotype 1B (strain NCTC 13174 / 8081).